Reading from the N-terminus, the 748-residue chain is Elongation factor G, mitochondrial (748 aa).

Residues 1–14 (MTISSFLRVRHSLA) constitute a mitochondrion transit peptide. The tr-type G domain occupies 40-318 (ERIRNIGISA…VLNYLPHPGE (279 aa)). Residues 49–56 (AHIDSGKT), 116–120 (DTPGH), and 170–173 (NKLD) each bind GTP.

It belongs to the TRAFAC class translation factor GTPase superfamily. Classic translation factor GTPase family. EF-G/EF-2 subfamily.

The protein resides in the mitochondrion. The protein operates within protein biosynthesis; polypeptide chain elongation. Mitochondrial GTPase that catalyzes the GTP-dependent ribosomal translocation step during translation elongation. During this step, the ribosome changes from the pre-translocational (PRE) to the post-translocational (POST) state as the newly formed A-site-bound peptidyl-tRNA and P-site-bound deacylated tRNA move to the P and E sites, respectively. Catalyzes the coordinated movement of the two tRNA molecules, the mRNA and conformational changes in the ribosome. The polypeptide is Elongation factor G, mitochondrial (Aedes aegypti (Yellowfever mosquito)).